The chain runs to 48 residues: Large ribosomal subunit protein bL33B (48 aa).

The protein belongs to the bacterial ribosomal protein bL33 family.

This is Large ribosomal subunit protein bL33B (rpmG2) from Mycoplasma genitalium (strain ATCC 33530 / DSM 19775 / NCTC 10195 / G37) (Mycoplasmoides genitalium).